The primary structure comprises 435 residues: Phosphomethylpyrimidine synthase (435 aa).

Residues N67, M96, Y125, H163, 185-187 (SRG), 226-229 (DGLR), and E265 each bind substrate. H269 is a Zn(2+) binding site. Position 292 (Y292) interacts with substrate. Position 333 (H333) interacts with Zn(2+). The [4Fe-4S] cluster site is built by C408, C411, and C415.

The protein belongs to the ThiC family. The cofactor is [4Fe-4S] cluster.

It catalyses the reaction 5-amino-1-(5-phospho-beta-D-ribosyl)imidazole + S-adenosyl-L-methionine = 4-amino-2-methyl-5-(phosphooxymethyl)pyrimidine + CO + 5'-deoxyadenosine + formate + L-methionine + 3 H(+). It functions in the pathway cofactor biosynthesis; thiamine diphosphate biosynthesis. Its function is as follows. Catalyzes the synthesis of the hydroxymethylpyrimidine phosphate (HMP-P) moiety of thiamine from aminoimidazole ribotide (AIR) in a radical S-adenosyl-L-methionine (SAM)-dependent reaction. This Thermus thermophilus (strain ATCC 27634 / DSM 579 / HB8) protein is Phosphomethylpyrimidine synthase.